Here is a 271-residue protein sequence, read N- to C-terminus: MKKMILIAGPCVIESKDLIFKVAEQLKNFNENPNIEFYFKSSFDKANRTSINSFRGPGLEEGLKILQSVKDEFGMKILTDIHESNQANPVSEVADVLQIPAFLCRQTDLLVAAAKTKAKVNIKKGQFLNPSDIKYSVKKALQTRGIEDEGYEAAQKNGVFVAERGSSFGYGNLVVDMRSLVIMREFAPVIFDATHSVQMPGAAGGSSGGKSEFVEPLARAAAAVGIDGFFFETHINPCEALCDGPNMLNLTRLKNCVNTLLEIQNIIKENK.

It belongs to the KdsA family.

It is found in the cytoplasm. It catalyses the reaction D-arabinose 5-phosphate + phosphoenolpyruvate + H2O = 3-deoxy-alpha-D-manno-2-octulosonate-8-phosphate + phosphate. The protein operates within carbohydrate biosynthesis; 3-deoxy-D-manno-octulosonate biosynthesis; 3-deoxy-D-manno-octulosonate from D-ribulose 5-phosphate: step 2/3. It participates in bacterial outer membrane biogenesis; lipopolysaccharide biosynthesis. The protein is 2-dehydro-3-deoxyphosphooctonate aldolase of Campylobacter jejuni subsp. jejuni serotype O:23/36 (strain 81-176).